Consider the following 64-residue polypeptide: Relaxin (64 aa).

3 disulfide bridges follow: cysteine 11-cysteine 51, cysteine 23-cysteine 64, and cysteine 50-cysteine 55.

The protein belongs to the insulin family. In terms of assembly, heterodimer of a B chain and an A chain linked by two disulfide bonds.

The protein resides in the secreted. In Leucoraja erinaceus (Little skate), this protein is Relaxin.